A 564-amino-acid chain; its full sequence is Serine/threonine-protein kinase DBF20 (564 aa).

Phosphoserine is present on S17. Residues L24–D62 are disordered. The 301-residue stretch at F169–F469 folds into the Protein kinase domain. ATP is bound by residues V175 to V183 and K198. Residue D292 is the Proton acceptor of the active site. S366 is subject to Phosphoserine. The region spanning A470–S547 is the AGC-kinase C-terminal domain. Phosphothreonine is present on T536.

It belongs to the protein kinase superfamily. Ser/Thr protein kinase family.

The catalysed reaction is L-seryl-[protein] + ATP = O-phospho-L-seryl-[protein] + ADP + H(+). It carries out the reaction L-threonyl-[protein] + ATP = O-phospho-L-threonyl-[protein] + ADP + H(+). In terms of biological role, is probably a Ser/Thr-protein kinase that may function in initiation of DNA synthesis and also in late nuclear division. This chain is Serine/threonine-protein kinase DBF20 (DBF20), found in Saccharomyces cerevisiae (strain ATCC 204508 / S288c) (Baker's yeast).